The chain runs to 257 residues: Ciliary microtubule associated protein 1B (257 aa).

STPGR repeat units follow at residues 103–129, 182–207, and 218–243; these read PGPGSYSPENATKATYLSPPAFTLSAR, PGPGTYQVVDPCVYKHKGPQYSMTGR, and PGPGAHYPEMVCFTRAKAPSFSFGIR.

This sequence belongs to the CIMAP family.

Its subcellular location is the cell projection. The protein resides in the cilium. The protein localises to the flagellum. This Danio rerio (Zebrafish) protein is Ciliary microtubule associated protein 1B (cimap1b).